Consider the following 287-residue polypeptide: Ribosomal RNA small subunit methyltransferase A (287 aa).

S-adenosyl-L-methionine is bound by residues asparagine 18, leucine 20, glycine 45, glutamate 66, aspartate 91, and asparagine 118.

Belongs to the class I-like SAM-binding methyltransferase superfamily. rRNA adenine N(6)-methyltransferase family. RsmA subfamily.

Its subcellular location is the cytoplasm. It catalyses the reaction adenosine(1518)/adenosine(1519) in 16S rRNA + 4 S-adenosyl-L-methionine = N(6)-dimethyladenosine(1518)/N(6)-dimethyladenosine(1519) in 16S rRNA + 4 S-adenosyl-L-homocysteine + 4 H(+). Its function is as follows. Specifically dimethylates two adjacent adenosines (A1518 and A1519) in the loop of a conserved hairpin near the 3'-end of 16S rRNA in the 30S particle. May play a critical role in biogenesis of 30S subunits. The sequence is that of Ribosomal RNA small subunit methyltransferase A from Haemophilus influenzae (strain PittEE).